Reading from the N-terminus, the 155-residue chain is Large ribosomal subunit protein uL22c (155 aa).

It belongs to the universal ribosomal protein uL22 family. As to quaternary structure, part of the 50S ribosomal subunit.

It is found in the plastid. The protein localises to the chloroplast. This protein binds specifically to 23S rRNA. Its function is as follows. The globular domain of the protein is located near the polypeptide exit tunnel on the outside of the subunit, while an extended beta-hairpin is found that lines the wall of the exit tunnel in the center of the 70S ribosome. The chain is Large ribosomal subunit protein uL22c (rpl22) from Atropa belladonna (Belladonna).